Reading from the N-terminus, the 759-residue chain is MDLRTMTQSLVTLAEDNMAFFSSQGPGETARRLSNVFAGVREQALGLEPTLGQLLGVAHHFDLDTETPANGYRSLVHTARCCLAHLLHKSRYVASNRKSIFFRASHNLAELEAYLAALTQLRAMAYYAQRLLTINRPGVLFFEGDEGLTADFLQEYVTLHKGCFYGRCLGFQFTPAIRPFLQTLSIGLVSFGEHYKRNETGLSVTASSLFTGGRFAIDPELRGAEFERIIQNLDVHFWKAFWNITEIEVLSSLANMASTTVRVSRLLSLPPEAFEMPLTSDPRLTVTISPPLAHTGPAPVLARLISYDLREGQDSKVLNSLAKSEGPRLELRPRPHQAPRSRALVVHIHGGGFVAQTSKSHEPYLKNWAQELGVPIFSIDYSLAPEAPFPRALEECFFAYCWAVKHCDLLGSTGERICLAGDSAGGNLCITVSLRAAAYGVRVPDGIMAAYPVTTLQSSASPSRLLSLMDPLLPLSVLSKCVSAYSGTEAEDHFDSDQKALGVMGLVQRDTSLFLRDLRLGASSWLNSFLELSGRKPQKTTSPTAESVRPTESMRRSVSEAALAQPEGLLGTDTLKKLTIKDLSNSEPSDSPEMSQSMETLGPSTPSDVNFFLRPGNSQEEAEAKDEVRPMDGVPRVRAAFPEGFHPRRSSQGVLHMPLYTSPIVKNPFMSPLLAPDSMLKTLPPVHLVACALDPMLDDSVMFARRLRDLGQPVTLKVVEDLPHGFLSLAALCRETRQATEFCVQRIRLILTPPAAPLN.

An Involved in the stabilization of the negatively charged intermediate by the formation of the oxyanion hole motif is present at residues 349–351 (HGG). Ser423 is a catalytic residue. Residues 534-553 (GRKPQKTTSPTAESVRPTES) are disordered. Position 557 is a phosphoserine (Ser557). Position 559 is a phosphoserine; by AMPK (Ser559). Phosphothreonine is present on Thr574. A disordered region spans residues 583 to 604 (LSNSEPSDSPEMSQSMETLGPS). Positions 585–604 (NSEPSDSPEMSQSMETLGPS) are enriched in polar residues. Phosphoserine occurs at positions 597, 618, 650, and 651. Residues Asp694 and His724 contribute to the active site.

This sequence belongs to the 'GDXG' lipolytic enzyme family. Monomer and homodimer. Interacts with CAVIN1 in the adipocyte cytoplasm. Interacts with PLIN5. Post-translationally, phosphorylation by AMPK reduces its translocation towards the lipid droplets.

It localises to the cell membrane. The protein localises to the membrane. Its subcellular location is the caveola. The protein resides in the cytoplasm. It is found in the cytosol. It localises to the lipid droplet. It catalyses the reaction a diacylglycerol + H2O = a monoacylglycerol + a fatty acid + H(+). The catalysed reaction is a triacylglycerol + H2O = a diacylglycerol + a fatty acid + H(+). The enzyme catalyses a monoacylglycerol + H2O = glycerol + a fatty acid + H(+). It carries out the reaction Hydrolyzes glycerol monoesters of long-chain fatty acids.. It catalyses the reaction cholesteryl (9Z-octadecenoate) + H2O = cholesterol + (9Z)-octadecenoate + H(+). The catalysed reaction is all-trans-retinyl hexadecanoate + H2O = all-trans-retinol + hexadecanoate + H(+). The enzyme catalyses 1,2-di-(9Z-octadecenoyl)-glycerol + H2O = (9Z-octadecenoyl)-glycerol + (9Z)-octadecenoate + H(+). It carries out the reaction 2-(5Z,8Z,11Z,14Z-eicosatetraenoyl)-glycerol + H2O = glycerol + (5Z,8Z,11Z,14Z)-eicosatetraenoate + H(+). It catalyses the reaction 1-(9Z-octadecenoyl)-glycerol + H2O = glycerol + (9Z)-octadecenoate + H(+). The catalysed reaction is 2-(9Z-octadecenoyl)-glycerol + H2O = glycerol + (9Z)-octadecenoate + H(+). The enzyme catalyses 1-O-hexadecyl-2-acetyl-sn-glycerol + H2O = 1-O-hexadecyl-sn-glycerol + acetate + H(+). It carries out the reaction 1,2-di-(9Z-octadecenoyl)-sn-glycerol + H2O = (9Z-octadecenoyl)-glycerol + (9Z)-octadecenoate + H(+). It catalyses the reaction 1,3-di-(9Z-octadecenoyl)-glycerol + H2O = 1-(9Z-octadecenoyl)-glycerol + (9Z)-octadecenoate + H(+). The catalysed reaction is 1,2-di-(9Z-octadecenoyl)-glycerol + (9Z)-octadecenoate + H(+) = 1,2,3-tri-(9Z-octadecenoyl)-glycerol + H2O. The enzyme catalyses 2,3-di-(9Z)-octadecenoyl-sn-glycerol + H2O = 2-(9Z-octadecenoyl)-glycerol + (9Z)-octadecenoate + H(+). It carries out the reaction 1,2,3-tri-(9Z-octadecenoyl)-glycerol + H2O = di-(9Z)-octadecenoylglycerol + (9Z)-octadecenoate + H(+). It catalyses the reaction 1,2-di-(9Z-octadecenoyl)-glycerol + H2O = 2-(9Z-octadecenoyl)-glycerol + (9Z)-octadecenoate + H(+). Its pathway is glycerolipid metabolism; triacylglycerol degradation. Lipase with broad substrate specificity, catalyzing the hydrolysis of triacylglycerols (TAGs), diacylglycerols (DAGs), monoacylglycerols (MAGs), cholesteryl esters and retinyl esters. Shows a preferential hydrolysis of DAGs over TAGs and MAGs and of the fatty acid (FA) esters at the sn-1 and sn-2 positions of the glycerol backbone in TAGs. Preferentially hydrolyzes FA esters at the sn-3 position of the glycerol backbone in DAGs. Catalyzes the hydrolysis of 2-arachidonoylglycerol, an endocannabinoid and of 2-acetyl monoalkylglycerol ether, the penultimate precursor of the pathway for de novo synthesis of platelet-activating factor. In adipose tissue and heart, it primarily hydrolyzes stored triglycerides to free fatty acids, while in steroidogenic tissues, it principally converts cholesteryl esters to free cholesterol for steroid hormone production. The chain is Hormone-sensitive lipase (Lipe) from Mus musculus (Mouse).